The primary structure comprises 270 residues: 4-hydroxy-tetrahydrodipicolinate reductase (270 aa).

Residue 7 to 12 (GANGKM) coordinates NAD(+). Position 34 (R34) interacts with NADP(+). NAD(+) is bound by residues 97–99 (GTT) and 121–124 (SGNM). Residue H155 is the Proton donor/acceptor of the active site. H156 contacts (S)-2,3,4,5-tetrahydrodipicolinate. K159 (proton donor) is an active-site residue. Residue 165–166 (GT) participates in (S)-2,3,4,5-tetrahydrodipicolinate binding.

The protein belongs to the DapB family.

The protein localises to the cytoplasm. It carries out the reaction (S)-2,3,4,5-tetrahydrodipicolinate + NAD(+) + H2O = (2S,4S)-4-hydroxy-2,3,4,5-tetrahydrodipicolinate + NADH + H(+). It catalyses the reaction (S)-2,3,4,5-tetrahydrodipicolinate + NADP(+) + H2O = (2S,4S)-4-hydroxy-2,3,4,5-tetrahydrodipicolinate + NADPH + H(+). It functions in the pathway amino-acid biosynthesis; L-lysine biosynthesis via DAP pathway; (S)-tetrahydrodipicolinate from L-aspartate: step 4/4. Catalyzes the conversion of 4-hydroxy-tetrahydrodipicolinate (HTPA) to tetrahydrodipicolinate. The protein is 4-hydroxy-tetrahydrodipicolinate reductase of Bartonella quintana (strain Toulouse) (Rochalimaea quintana).